The chain runs to 1487 residues: Major viral transcription factor (1487 aa).

Disordered regions lie at residues alanine 41–glycine 295, leucine 310–alanine 370, and proline 803–arginine 1007. A compositionally biased stretch (pro residues) spans valine 66–glutamate 75. 2 stretches are compositionally biased toward low complexity: residues proline 165–serine 193 and aspartate 201–serine 213. A compositionally biased stretch (acidic residues) spans aspartate 214–glutamate 224. Residues alanine 235 to glycine 272 are compositionally biased toward low complexity. Residues alanine 273–serine 285 show a composition bias toward pro residues. 3 stretches are compositionally biased toward low complexity: residues serine 807 to serine 829, proline 849 to glutamine 860, and alanine 867 to glutamine 877. Polar residues predominate over residues threonine 878–arginine 893. Residues histidine 920–lysine 929 show a composition bias toward basic residues. Over residues alanine 938–alanine 951 the composition is skewed to low complexity. Residues glycine 988 to arginine 1007 are compositionally biased toward basic and acidic residues.

It belongs to the herpesviridae ICP4 family. In terms of processing, a long stretch of serine residues may be a major site of phosphorylation.

It is found in the host nucleus. Functionally, this IE protein is a multifunctional protein capable of migrating to the nucleus, binding to DNA, trans-activating other viral genes, and autoregulating its own synthesis. This Equine herpesvirus 1 (strain Ab4p) (EHV-1) protein is Major viral transcription factor (IE).